Reading from the N-terminus, the 280-residue chain is Undecaprenyl-diphosphatase (280 aa).

Transmembrane regions (helical) follow at residues 3-23, 45-65, 88-108, 115-135, 150-170, 191-211, 225-245, and 255-275; these read IILL…EFLP, VDLF…YDYW, QLGL…FTFA, LFNP…IFYV, VSLK…IPGT, AEFS…LDFI, VLGI…RLLV, and IFAW…WGFG.

The protein belongs to the UppP family.

It localises to the cell inner membrane. The enzyme catalyses di-trans,octa-cis-undecaprenyl diphosphate + H2O = di-trans,octa-cis-undecaprenyl phosphate + phosphate + H(+). Catalyzes the dephosphorylation of undecaprenyl diphosphate (UPP). Confers resistance to bacitracin. The chain is Undecaprenyl-diphosphatase from Psychrobacter cryohalolentis (strain ATCC BAA-1226 / DSM 17306 / VKM B-2378 / K5).